The chain runs to 280 residues: Tryptophan synthase alpha chain (280 aa).

Active-site proton acceptor residues include Glu-49 and Asp-60.

It belongs to the TrpA family. As to quaternary structure, tetramer of two alpha and two beta chains.

The catalysed reaction is (1S,2R)-1-C-(indol-3-yl)glycerol 3-phosphate + L-serine = D-glyceraldehyde 3-phosphate + L-tryptophan + H2O. It functions in the pathway amino-acid biosynthesis; L-tryptophan biosynthesis; L-tryptophan from chorismate: step 5/5. Functionally, the alpha subunit is responsible for the aldol cleavage of indoleglycerol phosphate to indole and glyceraldehyde 3-phosphate. The polypeptide is Tryptophan synthase alpha chain (Corynebacterium glutamicum (strain R)).